The sequence spans 375 residues: Coproporphyrin III ferrochelatase (375 aa).

Positions 59 and 128 each coordinate Fe-coproporphyrin III. His-191 and Glu-286 together coordinate Fe(2+).

This sequence belongs to the ferrochelatase family.

It localises to the cytoplasm. The enzyme catalyses Fe-coproporphyrin III + 2 H(+) = coproporphyrin III + Fe(2+). The protein operates within porphyrin-containing compound metabolism; protoheme biosynthesis. Involved in coproporphyrin-dependent heme b biosynthesis. Catalyzes the insertion of ferrous iron into coproporphyrin III to form Fe-coproporphyrin III. The polypeptide is Coproporphyrin III ferrochelatase (Streptomyces coelicolor (strain ATCC BAA-471 / A3(2) / M145)).